The chain runs to 452 residues: Bis(5'-adenosyl)-triphosphatase enpp4 (452 aa).

An N-terminal signal peptide occupies residues 1 to 19 (MFGRVFIVAVLYCITICKG). Topologically, residues 20–407 (EDPTNSSTPK…NQWCIQVSEA (388 aa)) are extracellular. N-linked (GlcNAc...) asparagine glycosylation occurs at asparagine 24. Zn(2+)-binding residues include aspartate 36 and threonine 72. Threonine 72 acts as the AMP-threonine intermediate in catalysis. Asparagine 93 lines the substrate pocket. Residue asparagine 107 is glycosylated (N-linked (GlcNAc...) asparagine). Tyrosine 154 contributes to the substrate binding site. Asparagine 155 and asparagine 175 each carry an N-linked (GlcNAc...) asparagine glycan. 2 residues coordinate Zn(2+): aspartate 189 and histidine 193. Aspartate 189 is a substrate binding site. Asparagine 202 carries an N-linked (GlcNAc...) asparagine glycan. Aspartate 237 and histidine 238 together coordinate Zn(2+). Residues cysteine 254 and cysteine 287 are joined by a disulfide bond. N-linked (GlcNAc...) asparagine glycans are attached at residues asparagine 259 and asparagine 327. A Zn(2+)-binding site is contributed by histidine 336. N-linked (GlcNAc...) asparagine glycosylation is present at asparagine 386. Cysteines 394 and 401 form a disulfide. A helical transmembrane segment spans residues 408–428 (IGIVIGAIMVLTTLTCIIIML). At 429–452 (KKKMPSARPFSRLQFQDDDDPLIG) the chain is on the cytoplasmic side.

The protein belongs to the nucleotide pyrophosphatase/phosphodiesterase family. Zn(2+) serves as cofactor.

Its subcellular location is the cell membrane. The catalysed reaction is P(1),P(3)-bis(5'-adenosyl) triphosphate + H2O = AMP + ADP + 2 H(+). Hydrolyzes extracellular Ap3A into AMP and ADP, and Ap4A into AMP and ATP. Ap3A and Ap4A are diadenosine polyphosphates thought to induce proliferation of vascular smooth muscle cells. Acts as a procoagulant, mediating platelet aggregation at the site of nascent thrombus via release of ADP from Ap3A and activation of ADP receptors. This Xenopus laevis (African clawed frog) protein is Bis(5'-adenosyl)-triphosphatase enpp4 (enpp4).